The chain runs to 260 residues: Glucosamine-6-phosphate deaminase (260 aa).

Asp67 functions as the Proton acceptor; for enolization step in the catalytic mechanism. Asp136 (for ring-opening step) is an active-site residue. His138 acts as the Proton acceptor; for ring-opening step in catalysis. Glu143 functions as the For ring-opening step in the catalytic mechanism.

It belongs to the glucosamine/galactosamine-6-phosphate isomerase family. NagB subfamily.

The enzyme catalyses alpha-D-glucosamine 6-phosphate + H2O = beta-D-fructose 6-phosphate + NH4(+). It participates in amino-sugar metabolism; N-acetylneuraminate degradation; D-fructose 6-phosphate from N-acetylneuraminate: step 5/5. Catalyzes the reversible isomerization-deamination of glucosamine 6-phosphate (GlcN6P) to form fructose 6-phosphate (Fru6P) and ammonium ion. This is Glucosamine-6-phosphate deaminase from Arthrobacter sp. (strain FB24).